The chain runs to 147 residues: Hemoglobin subunit delta (147 aa).

The Globin domain maps to 3–147 (HLTPEEKTAV…VANALAHKYH (145 aa)). Position 51 is a phosphoserine (serine 51). 2 residues coordinate heme b: histidine 64 and histidine 93.

The protein belongs to the globin family. Heterotetramer of two delta chains and two alpha chains. As to expression, red blood cells.

The sequence is that of Hemoglobin subunit delta (HBD) from Gorilla gorilla gorilla (Western lowland gorilla).